The following is a 688-amino-acid chain: G protein-coupled receptor kinase 3 (688 aa).

Residues 1–190 (MADLEAVLAD…ELNIHLSMND (190 aa)) are N-terminal. The 122-residue stretch at 54–175 (TFDKIFNQKI…MESDKFTRFC (122 aa)) folds into the RGS domain. In terms of domain architecture, Protein kinase spans 191-453 (FSVHRIIGRG…ARELKEHIFF (263 aa)). Residues 197–205 (IGRGGFGEV) and Lys-220 contribute to the ATP site. Asp-317 functions as the Proton acceptor in the catalytic mechanism. Residues 454-521 (KGIDWQHVYL…VISERWQQEV (68 aa)) form the AGC-kinase C-terminal domain. In terms of domain architecture, PH spans 558 to 652 (DCIMHGYMLK…WLKELTCTFN (95 aa)).

The protein belongs to the protein kinase superfamily. AGC Ser/Thr protein kinase family. GPRK subfamily. In terms of assembly, interacts with GIT1. In terms of processing, ubiquitinated.

Its subcellular location is the postsynapse. The protein resides in the presynapse. The enzyme catalyses [beta-adrenergic receptor] + ATP = [beta-adrenergic receptor]-phosphate + ADP + H(+). Functionally, specifically phosphorylates the agonist-occupied form of the beta-adrenergic and closely related receptors. This Mus musculus (Mouse) protein is G protein-coupled receptor kinase 3.